Consider the following 707-residue polypeptide: Elongation factor G (707 aa).

The tr-type G domain occupies glutamate 8–threonine 290. Residues alanine 17 to threonine 24, aspartate 88 to histidine 92, and asparagine 142 to aspartate 145 contribute to the GTP site.

This sequence belongs to the TRAFAC class translation factor GTPase superfamily. Classic translation factor GTPase family. EF-G/EF-2 subfamily.

The protein resides in the cytoplasm. Catalyzes the GTP-dependent ribosomal translocation step during translation elongation. During this step, the ribosome changes from the pre-translocational (PRE) to the post-translocational (POST) state as the newly formed A-site-bound peptidyl-tRNA and P-site-bound deacylated tRNA move to the P and E sites, respectively. Catalyzes the coordinated movement of the two tRNA molecules, the mRNA and conformational changes in the ribosome. This chain is Elongation factor G, found in Idiomarina loihiensis (strain ATCC BAA-735 / DSM 15497 / L2-TR).